Reading from the N-terminus, the 1495-residue chain is Ras GTPase-activating-like protein IQG1 (1495 aa).

Residues 108–221 (LCRVSEVKIW…ILISMINKKW (114 aa)) enclose the Calponin-homology (CH) domain. Thr264 carries the post-translational modification Phosphothreonine. Phosphoserine is present on Ser268. A Phosphothreonine modification is found at Thr299. IQ domains follow at residues 447–467 (EQDI…VLSS), 538–567 (SHYP…KLND), 568–597 (ERES…AVHD), 599–628 (HKEN…SLGK), 629–658 (ENCN…PENN), 687–716 (EYNN…FYKR), and 717–746 (NVRS…CPNP). Residues 759–798 (NGTATIEEVQNQLESCQASLDSENMKKERLLKSIRQQLNI) are a coiled coil. The region spanning 876–1100 (SYFTRFVCEM…PHIKDVLYNV (225 aa)) is the Ras-GAP domain.

As to quaternary structure, interacts with AFR1. Interacts with AKR1. Interacts with activated CDC42. Interacts with calmodulin CMD1. Interacts with myosin MYO1 and its light chain MLC1. Interacts with BUD4. Interacts with INN1. Interacts with SEC3. Interacts with TEM1.

Its subcellular location is the bud neck. Functionally, required for the assembly and the contraction of the actomyosin ring at the bud neck during cytokinesis. Seems to be involved in additional tasks during cell division like axial bud-site selection and targeted secretion by recruiting the spatial landmark BUD4, the septin CDC12 and the secretion landmark SEC3 to the bud neck. May be regulated by calcium ions. The sequence is that of Ras GTPase-activating-like protein IQG1 (IQG1) from Saccharomyces cerevisiae (strain ATCC 204508 / S288c) (Baker's yeast).